An 89-amino-acid polypeptide reads, in one-letter code: Small ribosomal subunit protein uS15 (89 aa).

This sequence belongs to the universal ribosomal protein uS15 family. In terms of assembly, part of the 30S ribosomal subunit. Forms a bridge to the 50S subunit in the 70S ribosome, contacting the 23S rRNA.

Its function is as follows. One of the primary rRNA binding proteins, it binds directly to 16S rRNA where it helps nucleate assembly of the platform of the 30S subunit by binding and bridging several RNA helices of the 16S rRNA. In terms of biological role, forms an intersubunit bridge (bridge B4) with the 23S rRNA of the 50S subunit in the ribosome. This is Small ribosomal subunit protein uS15 from Pseudomonas fluorescens (strain Pf0-1).